A 258-amino-acid polypeptide reads, in one-letter code: Tryptophan synthase alpha chain (258 aa).

Active-site proton acceptor residues include E47 and D58.

The protein belongs to the TrpA family. As to quaternary structure, tetramer of two alpha and two beta chains.

It catalyses the reaction (1S,2R)-1-C-(indol-3-yl)glycerol 3-phosphate + L-serine = D-glyceraldehyde 3-phosphate + L-tryptophan + H2O. It functions in the pathway amino-acid biosynthesis; L-tryptophan biosynthesis; L-tryptophan from chorismate: step 5/5. Its function is as follows. The alpha subunit is responsible for the aldol cleavage of indoleglycerol phosphate to indole and glyceraldehyde 3-phosphate. The polypeptide is Tryptophan synthase alpha chain (Bacillus thuringiensis subsp. konkukian (strain 97-27)).